Reading from the N-terminus, the 229-residue chain is Triosephosphate isomerase (229 aa).

Asn6–Lys8 provides a ligand contact to substrate. The Electrophile role is filled by His85. The active-site Proton acceptor is the Glu152. Positions 158 and 188 each coordinate substrate.

Belongs to the triosephosphate isomerase family. Homodimer.

The protein localises to the cytoplasm. The enzyme catalyses D-glyceraldehyde 3-phosphate = dihydroxyacetone phosphate. The protein operates within carbohydrate biosynthesis; gluconeogenesis. It participates in carbohydrate degradation; glycolysis; D-glyceraldehyde 3-phosphate from glycerone phosphate: step 1/1. Involved in the gluconeogenesis. Catalyzes stereospecifically the conversion of dihydroxyacetone phosphate (DHAP) to D-glyceraldehyde-3-phosphate (G3P). In Campylobacter curvus (strain 525.92), this protein is Triosephosphate isomerase.